Here is a 320-residue protein sequence, read N- to C-terminus: Malate dehydrogenase (320 aa).

NAD(+) contacts are provided by residues 10 to 15 (GAGQIG) and Asp34. The substrate site is built by Arg83 and Arg89. NAD(+) is bound by residues Asn96 and 119–121 (ITN). Substrate-binding residues include Asn121 and Arg152. Catalysis depends on His176, which acts as the Proton acceptor.

This sequence belongs to the LDH/MDH superfamily. MDH type 3 family.

It catalyses the reaction (S)-malate + NAD(+) = oxaloacetate + NADH + H(+). Functionally, catalyzes the reversible oxidation of malate to oxaloacetate. This chain is Malate dehydrogenase, found in Dinoroseobacter shibae (strain DSM 16493 / NCIMB 14021 / DFL 12).